A 168-amino-acid chain; its full sequence is CDP-archaeol synthase (168 aa).

A run of 5 helical transmembrane segments spans residues 7–27 (PLES…PVLL), 55–75 (GLAT…SATC), 80–100 (YAAG…GAFI), 109–129 (GAPA…LALY), and 130–150 (AAGY…VIAL).

It belongs to the CDP-archaeol synthase family. Requires Mg(2+) as cofactor.

Its subcellular location is the cell membrane. The catalysed reaction is 2,3-bis-O-(geranylgeranyl)-sn-glycerol 1-phosphate + CTP + H(+) = CDP-2,3-bis-O-(geranylgeranyl)-sn-glycerol + diphosphate. Its pathway is membrane lipid metabolism; glycerophospholipid metabolism. Catalyzes the formation of CDP-2,3-bis-(O-geranylgeranyl)-sn-glycerol (CDP-archaeol) from 2,3-bis-(O-geranylgeranyl)-sn-glycerol 1-phosphate (DGGGP) and CTP. This reaction is the third ether-bond-formation step in the biosynthesis of archaeal membrane lipids. In Hyperthermus butylicus (strain DSM 5456 / JCM 9403 / PLM1-5), this protein is CDP-archaeol synthase.